The sequence spans 691 residues: Elongation factor G 1 (691 aa).

One can recognise a tr-type G domain in the interval 8–282 (ERVRNIGIAA…AVVDYLPAPQ (275 aa)). Residues 17-24 (AHIDAGKT), 81-85 (DTPGH), and 135-138 (NKMD) each bind GTP.

It belongs to the TRAFAC class translation factor GTPase superfamily. Classic translation factor GTPase family. EF-G/EF-2 subfamily.

It localises to the cytoplasm. Catalyzes the GTP-dependent ribosomal translocation step during translation elongation. During this step, the ribosome changes from the pre-translocational (PRE) to the post-translocational (POST) state as the newly formed A-site-bound peptidyl-tRNA and P-site-bound deacylated tRNA move to the P and E sites, respectively. Catalyzes the coordinated movement of the two tRNA molecules, the mRNA and conformational changes in the ribosome. This chain is Elongation factor G 1, found in Trichodesmium erythraeum (strain IMS101).